The following is a 240-amino-acid chain: DNA repair protein RecO (240 aa).

It belongs to the RecO family.

In terms of biological role, involved in DNA repair and RecF pathway recombination. The protein is DNA repair protein RecO of Actinobacillus pleuropneumoniae serotype 5b (strain L20).